The primary structure comprises 495 residues: ATP-NADH kinase YEF1 (495 aa).

Residues 442–480 (KYRLDSSKNGNDTISNPLESSCISSDAQDEERKSVTETE) form a disordered region. Polar residues predominate over residues 448 to 467 (SKNGNDTISNPLESSCISSD).

The protein belongs to the NAD kinase family. In terms of assembly, homooctamer. Mg(2+) serves as cofactor. Mn(2+) is required as a cofactor. Requires Co(2+) as cofactor. It depends on Ca(2+) as a cofactor.

It carries out the reaction NADH + ATP = ADP + NADPH + H(+). ATP-NADH kinase with a low phosphorylation activity of both NADH and NAD(+) to produce NADP and NADPH by using ATP. UTR1 is responsible for essentially all of the NAD/NADH kinase activity resident in the cytoplasm, whereas POS5 is responsible for all mitochondrial NAD/NADH kinase activity and consequent mitochondrial genome maintenance. YEF1 can substitute for UTR1 when overexpressed. In Saccharomyces cerevisiae (strain ATCC 204508 / S288c) (Baker's yeast), this protein is ATP-NADH kinase YEF1 (YEF1).